The following is a 165-amino-acid chain: Cytochrome c-type biogenesis protein CcmE (165 aa).

Over 1-7 (MTRKQRR) the chain is Cytoplasmic. The chain crosses the membrane as a helical; Signal-anchor for type II membrane protein span at residues 8-28 (LMMIGGAGVVLVVAVGLVLNA). Residues 29 to 165 (MRGSIVFFST…ASADAMRPAR (137 aa)) lie on the Periplasmic side of the membrane. Histidine 122 and tyrosine 126 together coordinate heme. Residues 138 to 149 (QGHWKDDYEKKP) show a composition bias toward basic and acidic residues. The disordered stretch occupies residues 138–165 (QGHWKDDYEKKPPGPGAAASADAMRPAR). Positions 153-165 (GAAASADAMRPAR) are enriched in low complexity.

Belongs to the CcmE/CycJ family.

It localises to the cell inner membrane. In terms of biological role, heme chaperone required for the biogenesis of c-type cytochromes. Transiently binds heme delivered by CcmC and transfers the heme to apo-cytochromes in a process facilitated by CcmF and CcmH. This chain is Cytochrome c-type biogenesis protein CcmE, found in Rhodopseudomonas palustris (strain HaA2).